Reading from the N-terminus, the 541-residue chain is Threonine--tRNA ligase catalytic subunit (541 aa).

The catalytic stretch occupies residues 135–429 (DHRIIGERMD…LLEHFRGKLP (295 aa)). Zn(2+)-binding residues include Cys227, His278, and His406.

The protein belongs to the class-II aminoacyl-tRNA synthetase family. In terms of assembly, homodimer. Probably interacts with its editing subunit. Requires Zn(2+) as cofactor.

It is found in the cytoplasm. The enzyme catalyses tRNA(Thr) + L-threonine + ATP = L-threonyl-tRNA(Thr) + AMP + diphosphate + H(+). Its function is as follows. Catalyzes the attachment of threonine to tRNA(Thr) in a two-step reaction: L-threonine is first activated by ATP to form Thr-AMP and then transferred to the acceptor end of tRNA(Thr). Also activates L-serine and transfers it to tRNA(Thr) but cannot deacylate incorrectly charged amino acid; unlike most archaea the editing function is found in a freestanding protein. This is Threonine--tRNA ligase catalytic subunit from Metallosphaera sedula (strain ATCC 51363 / DSM 5348 / JCM 9185 / NBRC 15509 / TH2).